We begin with the raw amino-acid sequence, 79 residues long: Translational regulator CsrA (79 aa).

The protein belongs to the CsrA/RsmA family. Homodimer; the beta-strands of each monomer intercalate to form a hydrophobic core, while the alpha-helices form wings that extend away from the core.

It is found in the cytoplasm. Its function is as follows. A translational regulator that binds mRNA to regulate translation initiation and/or mRNA stability. Usually binds in the 5'-UTR at or near the Shine-Dalgarno sequence preventing ribosome-binding, thus repressing translation. Its main target seems to be the major flagellin gene, while its function is anatagonized by FliW. In Syntrophus aciditrophicus (strain SB), this protein is Translational regulator CsrA.